We begin with the raw amino-acid sequence, 291 residues long: Lipoyl synthase 1 (291 aa).

The [4Fe-4S] cluster site is built by Cys34, Cys39, Cys45, Cys60, Cys64, Cys67, and Ser274. The Radical SAM core domain maps to 46–263 (FQAGTATFLI…QVYGEELGFL (218 aa)).

Belongs to the radical SAM superfamily. Lipoyl synthase family. It depends on [4Fe-4S] cluster as a cofactor.

Its subcellular location is the cytoplasm. The enzyme catalyses [[Fe-S] cluster scaffold protein carrying a second [4Fe-4S](2+) cluster] + N(6)-octanoyl-L-lysyl-[protein] + 2 oxidized [2Fe-2S]-[ferredoxin] + 2 S-adenosyl-L-methionine + 4 H(+) = [[Fe-S] cluster scaffold protein] + N(6)-[(R)-dihydrolipoyl]-L-lysyl-[protein] + 4 Fe(3+) + 2 hydrogen sulfide + 2 5'-deoxyadenosine + 2 L-methionine + 2 reduced [2Fe-2S]-[ferredoxin]. It participates in protein modification; protein lipoylation via endogenous pathway; protein N(6)-(lipoyl)lysine from octanoyl-[acyl-carrier-protein]: step 2/2. Functionally, catalyzes the radical-mediated insertion of two sulfur atoms into the C-6 and C-8 positions of the octanoyl moiety bound to the lipoyl domains of lipoate-dependent enzymes, thereby converting the octanoylated domains into lipoylated derivatives. This chain is Lipoyl synthase 1, found in Nostoc sp. (strain PCC 7120 / SAG 25.82 / UTEX 2576).